An 81-amino-acid polypeptide reads, in one-letter code: Large ribosomal subunit protein uL29c (81 aa).

It belongs to the universal ribosomal protein uL29 family.

It is found in the plastid. The protein resides in the chloroplast. The chain is Large ribosomal subunit protein uL29c from Phaeodactylum tricornutum (strain CCAP 1055/1).